Consider the following 461-residue polypeptide: Probable outer membrane lipoprotein SilC (461 aa).

Positions 1–17 (MFKLKLLSISTIFILAG) are cleaved as a signal peptide. Cysteine 18 carries the N-palmitoyl cysteine lipid modification. Residue cysteine 18 is the site of S-diacylglycerol cysteine attachment.

It belongs to the outer membrane factor (OMF) (TC 1.B.17) family.

Its subcellular location is the cell outer membrane. In terms of biological role, component of the sil cation-efflux system that confers resistance to silver. May be part of a three-component cation/proton antiporter. The sequence is that of Probable outer membrane lipoprotein SilC (silC) from Salmonella typhimurium.